We begin with the raw amino-acid sequence, 372 residues long: Inner membrane protein YbiR (372 aa).

Topologically, residues Met1–Arg13 are periplasmic. The next 2 helical transmembrane spans lie at Phe14 to Lys34 and Ser35 to Thr55. At Lys56 to Met85 the chain is on the periplasmic side. A helical transmembrane segment spans residues Val86–Val106. The Cytoplasmic portion of the chain corresponds to Pro107–Arg122. The chain crosses the membrane as a helical span at residues Leu123 to Pro143. Over Gln144–Ser155 the chain is Periplasmic. The chain crosses the membrane as a helical span at residues Phe156–Leu176. The Cytoplasmic segment spans residues Leu177–Gly208. The helical transmembrane segment at Leu209 to Val229 threads the bilayer. At Ala230–Thr247 the chain is on the periplasmic side. A helical transmembrane segment spans residues Leu248 to Leu268. At Gln269–Leu283 the chain is on the cytoplasmic side. The helical transmembrane segment at Trp284–Leu304 threads the bilayer. The Periplasmic portion of the chain corresponds to Asn305–Pro309. A helical transmembrane segment spans residues Ser310–Ala330. Residues Asn331–His348 lie on the Cytoplasmic side of the membrane. Residues Leu349–Leu369 form a helical membrane-spanning segment. Over Pro370–Asn372 the chain is Periplasmic.

This sequence belongs to the CitM (TC 2.A.11) transporter family.

It is found in the cell inner membrane. The polypeptide is Inner membrane protein YbiR (ybiR) (Escherichia coli (strain K12)).